A 303-amino-acid chain; its full sequence is uncharacterized protein (303 aa).

This is an uncharacterized protein from Haemophilus influenzae (strain ATCC 51907 / DSM 11121 / KW20 / Rd).